The sequence spans 308 residues: Protoheme IX farnesyltransferase (308 aa).

A run of 8 helical transmembrane segments spans residues Val-31–Val-51, Pro-53–Leu-73, Asn-102–Thr-122, Leu-124–Leu-144, Thr-149–Ser-169, Ala-170–Thr-190, Leu-240–Leu-260, and Tyr-288–Phe-308.

It belongs to the UbiA prenyltransferase family. Protoheme IX farnesyltransferase subfamily.

It localises to the cell membrane. The catalysed reaction is heme b + (2E,6E)-farnesyl diphosphate + H2O = Fe(II)-heme o + diphosphate. It functions in the pathway porphyrin-containing compound metabolism; heme O biosynthesis; heme O from protoheme: step 1/1. Its function is as follows. Converts heme B (protoheme IX) to heme O by substitution of the vinyl group on carbon 2 of heme B porphyrin ring with a hydroxyethyl farnesyl side group. This chain is Protoheme IX farnesyltransferase, found in Mycolicibacterium paratuberculosis (strain ATCC BAA-968 / K-10) (Mycobacterium paratuberculosis).